The following is a 93-amino-acid chain: Large ribosomal subunit protein uL23 (93 aa).

Belongs to the universal ribosomal protein uL23 family. In terms of assembly, part of the 50S ribosomal subunit. Contacts protein L29, and trigger factor when it is bound to the ribosome.

Functionally, one of the early assembly proteins it binds 23S rRNA. One of the proteins that surrounds the polypeptide exit tunnel on the outside of the ribosome. Forms the main docking site for trigger factor binding to the ribosome. This is Large ribosomal subunit protein uL23 from Campylobacter curvus (strain 525.92).